The sequence spans 383 residues: Galactokinase (383 aa).

A substrate-binding site is contributed by 34-37 (EHTD). Residue 124-130 (GAGLSSS) coordinates ATP. The Mg(2+) site is built by Ser130 and Glu162. Catalysis depends on Asp174, which acts as the Proton acceptor. Residue Tyr223 participates in substrate binding.

This sequence belongs to the GHMP kinase family. GalK subfamily.

The protein resides in the cytoplasm. It catalyses the reaction alpha-D-galactose + ATP = alpha-D-galactose 1-phosphate + ADP + H(+). Its pathway is carbohydrate metabolism; galactose metabolism. Catalyzes the transfer of the gamma-phosphate of ATP to D-galactose to form alpha-D-galactose-1-phosphate (Gal-1-P). This Yersinia pseudotuberculosis serotype IB (strain PB1/+) protein is Galactokinase.